The following is a 239-amino-acid chain: Probable transcriptional regulatory protein BAA_0622 (239 aa).

Belongs to the TACO1 family. YeeN subfamily.

The protein localises to the cytoplasm. The chain is Probable transcriptional regulatory protein BAA_0622 from Bacillus anthracis (strain A0248).